We begin with the raw amino-acid sequence, 171 residues long: Phosphinothricin N-acetyltransferase (171 aa).

In terms of domain architecture, N-acetyltransferase spans 7–171 (VQVRPGVEED…WDVAWYERPL (165 aa)). Acetyl-CoA contacts are provided by residues 94 to 96 (VYV), 102 to 107 (GRGIGS), and N133.

The protein belongs to the acetyltransferase family. PAT/BAR subfamily.

It catalyses the reaction phosphinothricin + acetyl-CoA = N-acetylphosphinothricin + CoA + H(+). Inactivates phosphinothricin (PPT) by transfer of an acetyl group from acetyl CoA. The physiological substrate could be a structurally related compound. The chain is Phosphinothricin N-acetyltransferase from Streptomyces coelicolor (strain ATCC BAA-471 / A3(2) / M145).